Consider the following 332-residue polypeptide: Palmitoyltransferase PFA3 (332 aa).

The Cytoplasmic segment spans residues M1–R13. A helical membrane pass occupies residues C14 to I34. The Lumenal portion of the chain corresponds to R35 to R37. The helical transmembrane segment at V38–I58 threads the bilayer. The Cytoplasmic portion of the chain corresponds to Y59–K147. Positions R104–I154 constitute a DHHC domain. A helical membrane pass occupies residues F148–S168. The Lumenal segment spans residues M169–T188. Residues L189–F209 traverse the membrane as a helical segment. Residues S210–V332 are Cytoplasmic-facing.

Belongs to the DHHC palmitoyltransferase family. PFA3 subfamily. In terms of processing, autopalmitoylated.

Its subcellular location is the vacuole membrane. The enzyme catalyses L-cysteinyl-[protein] + hexadecanoyl-CoA = S-hexadecanoyl-L-cysteinyl-[protein] + CoA. Palmitoyltransferase specific for VAC8. Palmitoylates VAC8 at one or more of its N-terminal cysteine residues, which is required for its proper membrane localization. This is Palmitoyltransferase PFA3 (PFA3) from Candida glabrata (strain ATCC 2001 / BCRC 20586 / JCM 3761 / NBRC 0622 / NRRL Y-65 / CBS 138) (Yeast).